Here is a 338-residue protein sequence, read N- to C-terminus: Inorganic pyrophosphatase (338 aa).

R129 serves as a coordination point for diphosphate. Residues D166, D171, and D203 each contribute to the Mg(2+) site.

The protein belongs to the PPase family. In terms of assembly, component of the NURF complex composed of Caf1-55, E(bx), Nurf-38 and Iswi. Mg(2+) serves as cofactor.

Its subcellular location is the cytoplasm. It localises to the nucleus. It catalyses the reaction diphosphate + H2O = 2 phosphate + H(+). In terms of biological role, component of NURF (nucleosome remodeling factor), a complex which catalyzes ATP-dependent nucleosome sliding and facilitates transcription of chromatin. NURF is required for homeotic gene expression, proper larval blood cell development, normal male X chromosome morphology, ecdysteroid signaling and metamorphosis. Inorganic pyrophosphatase (PPase), hydrolyzes inorganic pyrophosphate to inorganic phosphate, essential for driving critical biosynthetic reactions including transcription, replication, and DNA repair. The sequence is that of Inorganic pyrophosphatase (Nurf-38) from Drosophila melanogaster (Fruit fly).